A 101-amino-acid polypeptide reads, in one-letter code: MALTKADMAERLFEEVGLNKREAKELVESFFEEIRQALEDGVPVKLSGFGNFDLRDKNERPGRNPKTGEEIPISARRVVTFRPGQKLKSRVEAYAGNVKQS.

It belongs to the bacterial histone-like protein family. In terms of assembly, heterodimer of an alpha and a beta chain.

In terms of biological role, this protein is one of the two subunits of integration host factor, a specific DNA-binding protein that functions in genetic recombination as well as in transcriptional and translational control. The protein is Integration host factor subunit alpha of Alkalilimnicola ehrlichii (strain ATCC BAA-1101 / DSM 17681 / MLHE-1).